The sequence spans 309 residues: Ribosomal protein L11 methyltransferase (309 aa).

4 residues coordinate S-adenosyl-L-methionine: threonine 152, glycine 178, aspartate 200, and asparagine 242.

Belongs to the methyltransferase superfamily. PrmA family.

It is found in the cytoplasm. The enzyme catalyses L-lysyl-[protein] + 3 S-adenosyl-L-methionine = N(6),N(6),N(6)-trimethyl-L-lysyl-[protein] + 3 S-adenosyl-L-homocysteine + 3 H(+). Functionally, methylates ribosomal protein L11. This Pelobacter propionicus (strain DSM 2379 / NBRC 103807 / OttBd1) protein is Ribosomal protein L11 methyltransferase.